We begin with the raw amino-acid sequence, 565 residues long: Arginine--tRNA ligase (565 aa).

Residues 128–138 (ANPTGPLHVGH) carry the 'HIGH' region motif.

It belongs to the class-I aminoacyl-tRNA synthetase family. In terms of assembly, monomer.

The protein localises to the cytoplasm. It carries out the reaction tRNA(Arg) + L-arginine + ATP = L-arginyl-tRNA(Arg) + AMP + diphosphate. The sequence is that of Arginine--tRNA ligase from Albidiferax ferrireducens (strain ATCC BAA-621 / DSM 15236 / T118) (Rhodoferax ferrireducens).